We begin with the raw amino-acid sequence, 108 residues long: UPF0060 membrane protein Ent638_1931 (108 aa).

4 helical membrane-spanning segments follow: residues 6-26 (LLFF…WLWL), 29-49 (GASV…VWLL), 61-81 (AAYG…VDGV), and 85-105 (AYDW…VAGW).

Belongs to the UPF0060 family.

The protein localises to the cell inner membrane. The protein is UPF0060 membrane protein Ent638_1931 of Enterobacter sp. (strain 638).